The chain runs to 141 residues: Holo-[acyl-carrier-protein] synthase (141 aa).

Positions 8 and 61 each coordinate Mg(2+).

It belongs to the P-Pant transferase superfamily. AcpS family. Mg(2+) serves as cofactor.

The protein resides in the cytoplasm. The catalysed reaction is apo-[ACP] + CoA = holo-[ACP] + adenosine 3',5'-bisphosphate + H(+). Its function is as follows. Transfers the 4'-phosphopantetheine moiety from coenzyme A to a Ser of acyl-carrier-protein. The chain is Holo-[acyl-carrier-protein] synthase from Rhodopseudomonas palustris (strain HaA2).